A 484-amino-acid chain; its full sequence is Probable UDP-N-acetylglucosamine pyrophosphorylase (484 aa).

The Substrate binding signature appears at leucine 107–glycine 110. Residues leucine 107–glycine 110, lysine 121, glutamine 200, and glycine 226 contribute to the UTP site. Asparagine 227 contacts substrate. Aspartate 255 is a binding site for UTP. The short motif at glutamate 304 to tyrosine 305 is the Substrate binding element. Position 377 (lysine 377) interacts with UTP. Lysine 407 lines the substrate pocket.

Belongs to the UDPGP type 1 family.

It localises to the cytoplasm. It catalyses the reaction N-acetyl-alpha-D-glucosamine 1-phosphate + UTP + H(+) = UDP-N-acetyl-alpha-D-glucosamine + diphosphate. It participates in nucleotide-sugar biosynthesis; UDP-N-acetyl-alpha-D-glucosamine biosynthesis; UDP-N-acetyl-alpha-D-glucosamine from N-acetyl-alpha-D-glucosamine 1-phosphate: step 1/1. This chain is Probable UDP-N-acetylglucosamine pyrophosphorylase, found in Caenorhabditis elegans.